We begin with the raw amino-acid sequence, 157 residues long: Crossover junction endodeoxyribonuclease RuvC (157 aa).

Active-site residues include Asp7, Glu67, and Asp140. 3 residues coordinate Mg(2+): Asp7, Glu67, and Asp140.

It belongs to the RuvC family. As to quaternary structure, homodimer which binds Holliday junction (HJ) DNA. The HJ becomes 2-fold symmetrical on binding to RuvC with unstacked arms; it has a different conformation from HJ DNA in complex with RuvA. In the full resolvosome a probable DNA-RuvA(4)-RuvB(12)-RuvC(2) complex forms which resolves the HJ. Mg(2+) serves as cofactor.

Its subcellular location is the cytoplasm. The enzyme catalyses Endonucleolytic cleavage at a junction such as a reciprocal single-stranded crossover between two homologous DNA duplexes (Holliday junction).. Functionally, the RuvA-RuvB-RuvC complex processes Holliday junction (HJ) DNA during genetic recombination and DNA repair. Endonuclease that resolves HJ intermediates. Cleaves cruciform DNA by making single-stranded nicks across the HJ at symmetrical positions within the homologous arms, yielding a 5'-phosphate and a 3'-hydroxyl group; requires a central core of homology in the junction. The consensus cleavage sequence is 5'-(A/T)TT(C/G)-3'. Cleavage occurs on the 3'-side of the TT dinucleotide at the point of strand exchange. HJ branch migration catalyzed by RuvA-RuvB allows RuvC to scan DNA until it finds its consensus sequence, where it cleaves and resolves the cruciform DNA. The chain is Crossover junction endodeoxyribonuclease RuvC from Rickettsia africae (strain ESF-5).